Consider the following 396-residue polypeptide: Acetate kinase (396 aa).

Residue N7 coordinates Mg(2+). Residue K14 participates in ATP binding. Residue R91 participates in substrate binding. D148 acts as the Proton donor/acceptor in catalysis. ATP is bound by residues H208–G212, D283–R285, and G331–N335. E384 is a Mg(2+) binding site.

It belongs to the acetokinase family. Homodimer. Requires Mg(2+) as cofactor. Mn(2+) is required as a cofactor.

The protein localises to the cytoplasm. It catalyses the reaction acetate + ATP = acetyl phosphate + ADP. The protein operates within metabolic intermediate biosynthesis; acetyl-CoA biosynthesis; acetyl-CoA from acetate: step 1/2. In terms of biological role, catalyzes the formation of acetyl phosphate from acetate and ATP. Can also catalyze the reverse reaction. This is Acetate kinase from Alkaliphilus metalliredigens (strain QYMF).